The following is a 399-amino-acid chain: Elongation factor Tu (399 aa).

Residues 10–209 (KPHVNIGTIG…AVDEYIPTPE (200 aa)) form the tr-type G domain. A G1 region spans residues 19–26 (GHVDHGKT). 19–26 (GHVDHGKT) provides a ligand contact to GTP. T26 contributes to the Mg(2+) binding site. The G2 stretch occupies residues 60–64 (GITIA). A G3 region spans residues 81–84 (DCPG). GTP-binding positions include 81-85 (DCPGH) and 136-139 (NKED). The tract at residues 136–139 (NKED) is G4. Residues 174–176 (SAL) form a G5 region.

The protein belongs to the TRAFAC class translation factor GTPase superfamily. Classic translation factor GTPase family. EF-Tu/EF-1A subfamily. In terms of assembly, monomer.

It localises to the cytoplasm. It carries out the reaction GTP + H2O = GDP + phosphate + H(+). Functionally, GTP hydrolase that promotes the GTP-dependent binding of aminoacyl-tRNA to the A-site of ribosomes during protein biosynthesis. This is Elongation factor Tu from Nitratiruptor sp. (strain SB155-2).